Consider the following 203-residue polypeptide: ATP-dependent Clp protease proteolytic subunit 2 (203 aa).

The Nucleophile role is filled by Ser100. His125 is a catalytic residue.

This sequence belongs to the peptidase S14 family. Fourteen ClpP subunits assemble into 2 heptameric rings which stack back to back to give a disk-like structure with a central cavity, resembling the structure of eukaryotic proteasomes.

It localises to the cytoplasm. The enzyme catalyses Hydrolysis of proteins to small peptides in the presence of ATP and magnesium. alpha-casein is the usual test substrate. In the absence of ATP, only oligopeptides shorter than five residues are hydrolyzed (such as succinyl-Leu-Tyr-|-NHMec, and Leu-Tyr-Leu-|-Tyr-Trp, in which cleavage of the -Tyr-|-Leu- and -Tyr-|-Trp bonds also occurs).. In terms of biological role, cleaves peptides in various proteins in a process that requires ATP hydrolysis. Has a chymotrypsin-like activity. Plays a major role in the degradation of misfolded proteins. This is ATP-dependent Clp protease proteolytic subunit 2 from Thermobifida fusca (strain YX).